The chain runs to 239 residues: Ribosomal RNA small subunit methyltransferase G (239 aa).

Residues glycine 78, phenylalanine 83, 129–130 (AE), and arginine 148 contribute to the S-adenosyl-L-methionine site.

Belongs to the methyltransferase superfamily. RNA methyltransferase RsmG family.

The protein resides in the cytoplasm. Its function is as follows. Specifically methylates the N7 position of a guanine in 16S rRNA. The protein is Ribosomal RNA small subunit methyltransferase G of Clostridium botulinum (strain Kyoto / Type A2).